We begin with the raw amino-acid sequence, 152 residues long: Holo-[acyl-carrier-protein] synthase (152 aa).

Asp-7 and Glu-60 together coordinate Mg(2+).

It belongs to the P-Pant transferase superfamily. AcpS family. It depends on Mg(2+) as a cofactor.

It localises to the cytoplasm. The enzyme catalyses apo-[ACP] + CoA = holo-[ACP] + adenosine 3',5'-bisphosphate + H(+). Functionally, transfers the 4'-phosphopantetheine moiety from coenzyme A to a Ser of acyl-carrier-protein. The sequence is that of Holo-[acyl-carrier-protein] synthase from Bifidobacterium adolescentis (strain ATCC 15703 / DSM 20083 / NCTC 11814 / E194a).